The primary structure comprises 148 residues: Leghemoglobin 2 (148 aa).

Residues 2-148 (GFTEKQEALV…LSAAIKKAMS (147 aa)) enclose the Globin domain. Position 30 is a nitrated tyrosine (Tyr-30). A heme b-binding site is contributed by Ser-45. Ser-45 is subject to Phosphoserine. His-63 is an O2 binding site. Residues Lys-66, His-95, and Lys-98 each coordinate heme b. The residue at position 136 (Tyr-136) is a Nitrated tyrosine.

This sequence belongs to the plant globin family. Monomer. In terms of processing, nitrated in effective nodules and particularly in hypoxic conditions; this mechanism may play a protective role in the symbiosis by buffering toxic peroxynitrite NO(2)(-). Nitration level decrease during nodule senescence. Phosphorylation at Ser-45 disrupts the molecular environment of its porphyrin ring oxygen binding pocket, thus leading to a reduced oxygen consumption and to the delivery of oxygen O(2) to symbiosomes. As to expression, stem nodules.

Its subcellular location is the cytoplasm. It localises to the cytosol. The protein localises to the nucleus. Leghemoglobin that reversibly binds oxygen O(2) through a pentacoordinated heme iron. In stem nodules, facilitates the diffusion of oxygen to the bacteroids while preventing the bacterial nitrogenase from being inactivated by buffering dioxygen, nitric oxide and carbon monoxide, and promoting the formation of reactive oxygen species (ROS, e.g. H(2)O(2)). This role is essential for symbiotic nitrogen fixation (SNF). In Sesbania rostrata, this protein is Leghemoglobin 2.